The sequence spans 355 residues: Protein MGF 360-10L (355 aa).

One copy of the ANK repeat lies at 57-89 (DLNTALMLATKENNYQLIKLFTEWGADINYGLI).

The protein belongs to the asfivirus MGF 360 family.

Functionally, plays a role in virus cell tropism, and may be required for efficient virus replication in macrophages. The protein is Protein MGF 360-10L of African swine fever virus (isolate Tick/Malawi/Lil 20-1/1983) (ASFV).